Consider the following 207-residue polypeptide: Uridine kinase (207 aa).

Residue 14–21 (GGSGSGKT) participates in ATP binding.

The protein belongs to the uridine kinase family.

The protein localises to the cytoplasm. It catalyses the reaction uridine + ATP = UMP + ADP + H(+). The enzyme catalyses cytidine + ATP = CMP + ADP + H(+). The protein operates within pyrimidine metabolism; CTP biosynthesis via salvage pathway; CTP from cytidine: step 1/3. It participates in pyrimidine metabolism; UMP biosynthesis via salvage pathway; UMP from uridine: step 1/1. This Deinococcus deserti (strain DSM 17065 / CIP 109153 / LMG 22923 / VCD115) protein is Uridine kinase.